Reading from the N-terminus, the 146-residue chain is 3-dehydroquinate dehydratase (146 aa).

The Proton acceptor role is filled by Tyr-22. Residues Asn-74, His-80, and Asp-87 each contribute to the substrate site. His-100 (proton donor) is an active-site residue. Substrate contacts are provided by residues 101 to 102 (LS) and Arg-111.

It belongs to the type-II 3-dehydroquinase family. As to quaternary structure, homododecamer.

It catalyses the reaction 3-dehydroquinate = 3-dehydroshikimate + H2O. It participates in metabolic intermediate biosynthesis; chorismate biosynthesis; chorismate from D-erythrose 4-phosphate and phosphoenolpyruvate: step 3/7. Catalyzes a trans-dehydration via an enolate intermediate. The sequence is that of 3-dehydroquinate dehydratase from Clostridium perfringens (strain 13 / Type A).